Here is a 205-residue protein sequence, read N- to C-terminus: uncharacterized protein (205 aa).

Residues 1–25 (MSNNNNEAQQPVESTNVESQQNVVQ) are compositionally biased toward polar residues. Residues 1-205 (MSNNNNEAQQ…TSDPAQQVEA (205 aa)) form a disordered region. Low complexity predominate over residues 32–79 (NENNDNNNNNNNNNNNNNNNNNNNNNNNNSNNNNNSSNNENNENNENN). The segment covering 80 to 122 (SCEKSEQEKPKEPEEPVQEEKSKEPCDQQKVKENEPAEEKETE) has biased composition (basic and acidic residues). 2 stretches are compositionally biased toward low complexity: residues 123–132 (PAAPVEPENP) and 146–162 (QHQQQNHEPQQTSNGES). The segment covering 170–185 (SENKKRSIDEAGDIKD) has biased composition (basic and acidic residues). Positions 194–205 (VETSDPAQQVEA) are enriched in polar residues.

This is an uncharacterized protein from Dictyostelium discoideum (Social amoeba).